The primary structure comprises 103 residues: MIVTTTSGIQGKEIIEYIDIVNGEAIMGANIVRDLFASVRDVVGGRAGSYESKLKEARDIAMDEMKELAKQKGANAIVGVDVDYEVVRDGMLMVAVSGTAVRI.

It belongs to the UPF0145 family.

The protein is UPF0145 protein BCE33L0904 of Bacillus cereus (strain ZK / E33L).